The chain runs to 239 residues: tRNA1(Val) (adenine(37)-N6)-methyltransferase (239 aa).

It belongs to the methyltransferase superfamily. tRNA (adenine-N(6)-)-methyltransferase family.

The protein localises to the cytoplasm. The catalysed reaction is adenosine(37) in tRNA1(Val) + S-adenosyl-L-methionine = N(6)-methyladenosine(37) in tRNA1(Val) + S-adenosyl-L-homocysteine + H(+). Its function is as follows. Specifically methylates the adenine in position 37 of tRNA(1)(Val) (anticodon cmo5UAC). In Vibrio campbellii (strain ATCC BAA-1116), this protein is tRNA1(Val) (adenine(37)-N6)-methyltransferase.